A 307-amino-acid chain; its full sequence is Elongation factor Ts (307 aa).

The involved in Mg(2+) ion dislocation from EF-Tu stretch occupies residues Thr80–Val83.

Belongs to the EF-Ts family.

Its subcellular location is the cytoplasm. Associates with the EF-Tu.GDP complex and induces the exchange of GDP to GTP. It remains bound to the aminoacyl-tRNA.EF-Tu.GTP complex up to the GTP hydrolysis stage on the ribosome. In Nitrobacter hamburgensis (strain DSM 10229 / NCIMB 13809 / X14), this protein is Elongation factor Ts.